Here is a 392-residue protein sequence, read N- to C-terminus: Stilbene synthase 2 (392 aa).

Position 55–58 (55–58 (KFNR)) interacts with substrate. Residue cysteine 164 is part of the active site. Residues leucine 267 and 305-307 (GGP) contribute to the substrate site.

It belongs to the thiolase-like superfamily. Chalcone/stilbene synthases family. Homodimer.

It localises to the cytoplasm. It catalyses the reaction 4-coumaroyl-CoA + 3 malonyl-CoA + 3 H(+) = trans-resveratrol + 4 CO2 + 4 CoA. It functions in the pathway phytoalexin biosynthesis; 3,4',5-trihydroxystilbene biosynthesis; 3,4',5-trihydroxystilbene from trans-4-coumarate: step 2/2. Functionally, mediates resistance to pathogens which are sensitive to stilbenes. This is Stilbene synthase 2 from Vitis vinifera (Grape).